The sequence spans 1741 residues: DNA-directed RNA polymerase III subunit RPC1 (1741 aa).

Residues Cys-79, Cys-82, Cys-89, His-92, Cys-119, Cys-122, and Cys-160 each contribute to the Zn(2+) site. 3 residues coordinate Mg(2+): Asp-722, Asp-724, and Asp-726. Residues 1099-1111 (PFEFLAHARAGRD) form a bridging helix region. Positions 1719-1741 (RHANKRSWSRGKERHASLKPKNR) are disordered.

This sequence belongs to the RNA polymerase beta' chain family. Component of the RNA polymerase III (Pol III) complex consisting of 17 subunits.

The protein localises to the nucleus. The catalysed reaction is RNA(n) + a ribonucleoside 5'-triphosphate = RNA(n+1) + diphosphate. DNA-dependent RNA polymerase catalyzes the transcription of DNA into RNA using the four ribonucleoside triphosphates as substrates. Largest and catalytic core component of RNA polymerase III which synthesizes small RNAs, such as 5S rRNA and tRNAs. Forms the polymerase active center together with the second largest subunit. A single-stranded DNA template strand of the promoter is positioned within the central active site cleft of Pol III. A bridging helix emanates from RPC1 and crosses the cleft near the catalytic site and is thought to promote translocation of Pol III by acting as a ratchet that moves the RNA-DNA hybrid through the active site by switching from straight to bent conformations at each step of nucleotide addition. In Giardia intestinalis (Giardia lamblia), this protein is DNA-directed RNA polymerase III subunit RPC1 (RPOA3).